Consider the following 388-residue polypeptide: Gastricsin (388 aa).

The signal sequence occupies residues 1 to 16 (MKWMVVVLVCLQLLEA). A propeptide spans 17 to 59 (AVVKVPLKKFKSIRETMKEKGLLGEFLRTHKYDPAWKYRFGDL) (activation peptide). The Peptidase A1 domain maps to 73 to 385 (YFGEISIGTP…DLGNNRVGFA (313 aa)). Asp-91 is an active-site residue. Cystine bridges form between Cys-104–Cys-109 and Cys-267–Cys-271. Asp-276 is a catalytic residue. Residues Cys-310 and Cys-343 are joined by a disulfide bond.

This sequence belongs to the peptidase A1 family.

It localises to the secreted. It carries out the reaction More restricted specificity than pepsin A, but shows preferential cleavage at Tyr-|-Xaa bonds. High activity on hemoglobin.. Its function is as follows. Hydrolyzes a variety of proteins. This is Gastricsin (PGC) from Homo sapiens (Human).